The sequence spans 294 residues: Shell matrix protein (294 aa).

Component of the organic matrix of calcified shell layers like nacre and prisms.

The protein localises to the secreted. This Mytilus californianus (California mussel) protein is Shell matrix protein.